A 206-amino-acid polypeptide reads, in one-letter code: Large ribosomal subunit protein uL4 (206 aa).

Residues 43–78 (ARSGNRKQKDREEVKHTTKKPWRQKGTGRARAGMSS) are disordered. Positions 49 to 58 (KQKDREEVKH) are enriched in basic and acidic residues. Positions 59–70 (TTKKPWRQKGTG) are enriched in basic residues.

Belongs to the universal ribosomal protein uL4 family. Part of the 50S ribosomal subunit.

Functionally, one of the primary rRNA binding proteins, this protein initially binds near the 5'-end of the 23S rRNA. It is important during the early stages of 50S assembly. It makes multiple contacts with different domains of the 23S rRNA in the assembled 50S subunit and ribosome. In terms of biological role, forms part of the polypeptide exit tunnel. This Ralstonia pickettii (strain 12J) protein is Large ribosomal subunit protein uL4.